A 585-amino-acid polypeptide reads, in one-letter code: Amyloid protein-binding protein 2 (585 aa).

8 TPR repeats span residues 50–83 (QGRL…HHCF), 120–153 (IQVG…CTLH), 206–239 (AALY…ITAG), 288–321 (SDTL…RQSV), 333–367 (HEDL…ITHI), 429–462 (AKHY…KEQL), 471–505 (ALSV…GKKL), and 514–547 (EYDY…NRLR).

As to quaternary structure, component of a CRL2 E3 ubiquitin-protein ligase complex, also named ECS (Elongin BC-CUL2/5-SOCS-box protein) complex, composed of CUL2, Elongin BC (ELOB and ELOC), RBX1 and substrate-specific adapter APPBP2. Interacts with APP; APP interaction inhibits the E3 ubiquitin-protein ligase activity of the CRL2(APPBP2) complex. Post-translationally, rapidly degraded by the proteasome upon overexpression of a C-terminal fragment of APP.

The protein localises to the nucleus. The protein resides in the cytoplasm. Its subcellular location is the cytoskeleton. It localises to the membrane. The protein operates within protein modification; protein ubiquitination. With respect to regulation, E3 ubiquitin-protein ligase activity of the CRL2(APPBP2) complex is inhibited by APP. Functionally, substrate-recognition component of a Cul2-RING (CRL2) E3 ubiquitin-protein ligase complex of the DesCEND (destruction via C-end degrons) pathway, which recognizes a C-degron located at the extreme C terminus of target proteins, leading to their ubiquitination and degradation. The C-degron recognized by the DesCEND pathway is usually a motif of less than ten residues and can be present in full-length proteins, truncated proteins or proteolytically cleaved forms. The CRL2(APPBP2) complex specifically recognizes proteins with a -Arg-Xaa-Xaa-Gly degron at the C-terminus, leading to their ubiquitination and degradation. The CRL2(APPBP2) complex mediates ubiquitination and degradation of truncated SELENOV selenoproteins produced by failed UGA/Sec decoding, which end with a -Arg-Xaa-Xaa-Gly degron. May play a role in intracellular protein transport: may be involved in the translocation of APP along microtubules toward the cell surface. The protein is Amyloid protein-binding protein 2 of Mus musculus (Mouse).